We begin with the raw amino-acid sequence, 22 residues long: Brevinin-2LTa (22 aa).

In terms of tissue distribution, expressed by the skin glands.

The protein resides in the secreted. Functionally, has antibacterial activity. This Rana latastei (Italian agile frog) protein is Brevinin-2LTa.